The chain runs to 1591 residues: Rho guanine nucleotide exchange factor TIAM1 (1591 aa).

A disordered region spans residues 1–70 (MGNAESQNVD…TPSIPQSLAE (70 aa)). Residue G2 is the site of N-myristoyl glycine attachment. The span at 8–19 (NVDHEFYGEKHA) shows a compositional bias: basic and acidic residues. The span at 20-49 (SLGRKHTSRSLRLSHKTRRTRHASSGKAIH) shows a compositional bias: basic residues. Low complexity predominate over residues 53 to 67 (EVSTRSSSTPSIPQS). Phosphoserine is present on residues S231, S356, and S358. 2 disordered regions span residues 305-380 (QISL…DRAR) and 393-422 (MSTT…SPGQ). Residues 340–359 (TTDTDLLSRRSNATNSSYSP) show a composition bias toward polar residues. Over residues 367–376 (GSDSGSSSTG) the composition is skewed to low complexity. Positions 412-422 (QSSGTLSSPGQ) are enriched in polar residues. The PH 1 domain occupies 434–549 (VRKAGALAVK…TAIHSACAAA (116 aa)). The residue at position 695 (S695) is a Phosphoserine. The RBD domain maps to 765-832 (TPSWFCLPNN…QPEEDIYELL (68 aa)). Y829 is modified (phosphotyrosine; by NTRK2). The region spanning 845 to 908 (NIHIEKSDAA…NNRAAGTLNS (64 aa)) is the PDZ domain. Positions 933-1034 (GVELLENPPH…TSPQLATTRQ (102 aa)) are disordered. Positions 958 to 975 (LTSNPGHSLSSEQGSSAE) are enriched in polar residues. A compositionally biased stretch (acidic residues) spans 977–990 (APEEGEGPDLESSD). Low complexity predominate over residues 1014–1028 (PSDSSPSPQDATSPQ). A DH domain is found at 1040–1234 (KLRKVICELL…NKVASHINEM (195 aa)). Residues 1261–1397 (DLSMGDLLLH…KSVHSILRDK (137 aa)) enclose the PH 2 domain. Y1323 carries the post-translational modification Phosphotyrosine. Residues K1404 and K1420 each participate in a glycyl lysine isopeptide (Lys-Gly) (interchain with G-Cter in ubiquitin) cross-link. Residues 1456-1481 (TIDSDAISASSPEKEPQQPAGGGDTD) form a disordered region. Residue S1519 is modified to Phosphoserine.

The protein belongs to the TIAM family. In terms of assembly, component of the Par polarity complex, composed of at least phosphorylated PRKCZ, PARD3 and TIAM1. Interacts with BAIAP2. Interacts (via PDZ domain) with CNTNAP4, SDC1 and SDC3 (via C-terminus). Interacts with CD44, PARD3 and MAPK8IP2. Interacts with EPHA8; regulates clathrin-mediated endocytosis of EPHA8. Interacts with NTRK2; mediates the activation of RAC1 by BDNF. Ubiquitinated. Undergoes 'Lys-48' ubiquitination at Lys-1404 and Lys-1420 by a CUL3(KBTBD6/7) E3 ubiquitin ligase complex composed of CUL3, RBX1, KBTBD6 and KBTBD7. 'Lys-48' ubiquitination at Lys-1404 and Lys-1420 triggers proteasomal degradation. Ubiquitination at Lys-1404 and Lys-1420 by CUL3(KBTBD6/7) also requires the membrane-associated protein GABARAP and may therefore be spatially restricted within the cell. In terms of tissue distribution, highly expressed in brain and testis and at low or moderate levels in almost all other normal tissues. Found in virtually all analyzed tumor cell lines including B- and T-lymphomas, neuroblastomas, melanomas and carcinomas.

The protein resides in the cell junction. Its subcellular location is the cell membrane. Functionally, guanyl-nucleotide exchange factor that activates RHO-like proteins and connects extracellular signals to cytoskeletal activities. Activates RAC1, CDC42, and to a lesser extent RHOA and their downstream signaling to regulate processes like cell adhesion and cell migration. In Mus musculus (Mouse), this protein is Rho guanine nucleotide exchange factor TIAM1.